The primary structure comprises 71 residues: Small ribosomal subunit protein bS21 (71 aa).

A disordered region spans residues 39–71 (EKPTQERKRKAAAAVKRQLRRSSRDVTKRQRLY). Basic residues predominate over residues 45–59 (RKRKAAAAVKRQLRR). Over residues 60–71 (SSRDVTKRQRLY) the composition is skewed to basic and acidic residues.

This sequence belongs to the bacterial ribosomal protein bS21 family.

This Stenotrophomonas maltophilia (strain K279a) protein is Small ribosomal subunit protein bS21.